The primary structure comprises 292 residues: Ornithine decarboxylase antizyme (292 aa).

Belongs to the ODC antizyme family. As to quaternary structure, interacts with ODC/SPE1 and thereby sterically blocks ODC homodimerization.

Its function is as follows. Ornithine decarboxylase (ODC) antizyme protein that negatively regulates ODC activity and intracellular polyamine biosynthesis in response to increased intracellular polyamine levels. Binds to ODC/SPE1 monomers, inhibiting the assembly of the functional ODC homodimer, and targets the monomers for ubiquitin-independent proteolytic destruction by the 26S proteasome. This is Ornithine decarboxylase antizyme (OAZ1) from Saccharomyces cerevisiae (strain ATCC 204508 / S288c) (Baker's yeast).